Reading from the N-terminus, the 182-residue chain is Hypoxanthine/guanine phosphoribosyltransferase (182 aa).

It belongs to the purine/pyrimidine phosphoribosyltransferase family. Archaeal HPRT subfamily. As to quaternary structure, homodimer.

Its subcellular location is the cytoplasm. It carries out the reaction IMP + diphosphate = hypoxanthine + 5-phospho-alpha-D-ribose 1-diphosphate. It catalyses the reaction GMP + diphosphate = guanine + 5-phospho-alpha-D-ribose 1-diphosphate. It functions in the pathway purine metabolism; IMP biosynthesis via salvage pathway; IMP from hypoxanthine: step 1/1. Functionally, catalyzes a salvage reaction resulting in the formation of IMP that is energically less costly than de novo synthesis. In Methanospirillum hungatei JF-1 (strain ATCC 27890 / DSM 864 / NBRC 100397 / JF-1), this protein is Hypoxanthine/guanine phosphoribosyltransferase.